A 473-amino-acid polypeptide reads, in one-letter code: Serine/threonine-protein phosphatase 2A activator 1 (473 aa).

The tract at residues 360 to 473 is disordered; sequence NAVPPPTSAH…HVPTKAPWAK (114 aa). The span at 368-378 shows a compositional bias: polar residues; sequence AHMSTTQSQSR. The span at 395–416 shows a compositional bias: low complexity; the sequence is APWATATQAAPPAGAGTAAPWA.

This sequence belongs to the PTPA-type PPIase family.

It is found in the cytoplasm. The protein localises to the nucleus. The catalysed reaction is [protein]-peptidylproline (omega=180) = [protein]-peptidylproline (omega=0). Its function is as follows. PPIases accelerate the folding of proteins. It catalyzes the cis-trans isomerization of proline imidic peptide bonds in oligopeptides. Acts as a regulatory subunit for PP2A-like phosphatases modulating their activity or substrate specificity, probably by inducing a conformational change in the catalytic subunit, a direct target of the PPIase. Can reactivate inactive phosphatase PP2A-phosphatase methylesterase complexes (PP2Ai) in presence of ATP and Mg(2+) by dissociating the inactive form from the complex. This is Serine/threonine-protein phosphatase 2A activator 1 (rrd1) from Aspergillus fumigatus (strain ATCC MYA-4609 / CBS 101355 / FGSC A1100 / Af293) (Neosartorya fumigata).